The sequence spans 437 residues: Protein PhoH2 (437 aa).

Residues 7–134 form the PINc domain; the sequence is RTYVLDTSVL…LVSKDIPLRV (128 aa).

The protein in the N-terminal section; belongs to the PINc/VapC protein family. In the C-terminal section; belongs to the PhoH family. Interacts with antitoxin PhoAT. It depends on Mg(2+) as a cofactor.

The enzyme catalyses n ATP + n H2O + wound RNA = n ADP + n phosphate + unwound RNA.. It carries out the reaction ATP + H2O = ADP + phosphate + H(+). It catalyses the reaction GTP + H2O = GDP + phosphate + H(+). In terms of biological role, toxic component of a type II toxin-antitoxin (TA) system. The possible cognate antitoxin is PhoAT; the toxin gene can be expressed in the absence of the antitoxin gene in an endogenous mc(2)155 double deletion. Unwinds and/or cleaves 5'-tailed RNA in vitro that starts with 5'-AC, the reaction requires hydrolyzable ATP; double-stranded (ds)RNA and dsDNA are not unwound or cleaved. Has ATPase and GTPase activities. This is Protein PhoH2 from Mycolicibacterium smegmatis (strain ATCC 700084 / mc(2)155) (Mycobacterium smegmatis).